The following is a 103-amino-acid chain: Small ribosomal subunit protein uS10 (103 aa).

This sequence belongs to the universal ribosomal protein uS10 family. As to quaternary structure, part of the 30S ribosomal subunit.

Involved in the binding of tRNA to the ribosomes. The chain is Small ribosomal subunit protein uS10 from Chlorobium phaeobacteroides (strain DSM 266 / SMG 266 / 2430).